A 361-amino-acid polypeptide reads, in one-letter code: tRNA/tmRNA (uracil-C(5))-methyltransferase (361 aa).

Glutamine 183, tyrosine 211, asparagine 216, glutamate 232, and aspartate 294 together coordinate S-adenosyl-L-methionine. Cysteine 319 acts as the Nucleophile in catalysis. The active-site Proton acceptor is the glutamate 353.

It belongs to the class I-like SAM-binding methyltransferase superfamily. RNA M5U methyltransferase family. TrmA subfamily.

It carries out the reaction uridine(54) in tRNA + S-adenosyl-L-methionine = 5-methyluridine(54) in tRNA + S-adenosyl-L-homocysteine + H(+). The catalysed reaction is uridine(341) in tmRNA + S-adenosyl-L-methionine = 5-methyluridine(341) in tmRNA + S-adenosyl-L-homocysteine + H(+). Its function is as follows. Dual-specificity methyltransferase that catalyzes the formation of 5-methyluridine at position 54 (m5U54) in all tRNAs, and that of position 341 (m5U341) in tmRNA (transfer-mRNA). In Acinetobacter baumannii (strain AYE), this protein is tRNA/tmRNA (uracil-C(5))-methyltransferase.